The chain runs to 292 residues: Elongation factor Ts (292 aa).

Positions 79 to 82 (TDFV) are involved in Mg(2+) ion dislocation from EF-Tu.

Belongs to the EF-Ts family.

The protein resides in the cytoplasm. Its function is as follows. Associates with the EF-Tu.GDP complex and induces the exchange of GDP to GTP. It remains bound to the aminoacyl-tRNA.EF-Tu.GTP complex up to the GTP hydrolysis stage on the ribosome. This Metamycoplasma arthritidis (strain 158L3-1) (Mycoplasma arthritidis) protein is Elongation factor Ts.